Reading from the N-terminus, the 65-residue chain is Large ribosomal subunit protein bL35 (65 aa).

This sequence belongs to the bacterial ribosomal protein bL35 family.

This Clostridium kluyveri (strain NBRC 12016) protein is Large ribosomal subunit protein bL35.